The sequence spans 120 residues: Testis-expressed protein 48 (120 aa).

Over residues 29–45 (KVPSQTQEHKPSTQNLL) the composition is skewed to polar residues. Residues 29-86 (KVPSQTQEHKPSTQNLLLQKDELDRQNPKRINAVSHLPSRTPLIQTKKSTSSSSSEFE) are disordered. A compositionally biased stretch (low complexity) spans 74–83 (TKKSTSSSSS).

This is Testis-expressed protein 48 from Homo sapiens (Human).